Here is a 312-residue protein sequence, read N- to C-terminus: Ribonuclease Z (312 aa).

Histidine 61, histidine 63, aspartate 65, histidine 66, histidine 148, aspartate 216, and histidine 275 together coordinate Zn(2+). Aspartate 65 serves as the catalytic Proton acceptor.

It belongs to the RNase Z family. As to quaternary structure, homodimer. Requires Zn(2+) as cofactor.

The enzyme catalyses Endonucleolytic cleavage of RNA, removing extra 3' nucleotides from tRNA precursor, generating 3' termini of tRNAs. A 3'-hydroxy group is left at the tRNA terminus and a 5'-phosphoryl group is left at the trailer molecule.. Zinc phosphodiesterase, which displays some tRNA 3'-processing endonuclease activity. Probably involved in tRNA maturation, by removing a 3'-trailer from precursor tRNA. The polypeptide is Ribonuclease Z (Clostridium tetani (strain Massachusetts / E88)).